Consider the following 192-residue polypeptide: Thymidine kinase (192 aa).

ATP contacts are provided by residues 9–16 and 87–90; these read SAMNAGKS and DECQ. Glu-88 acts as the Proton acceptor in catalysis. The Zn(2+) site is built by Cys-145, Cys-147, Cys-182, and His-185.

The protein belongs to the thymidine kinase family. In terms of assembly, homotetramer.

Its subcellular location is the cytoplasm. The enzyme catalyses thymidine + ATP = dTMP + ADP + H(+). In Vibrio cholerae serotype O1 (strain ATCC 39315 / El Tor Inaba N16961), this protein is Thymidine kinase.